Consider the following 256-residue polypeptide: Sec-independent protein translocase protein TatC (256 aa).

The next 6 membrane-spanning stretches (helical) occupy residues 25-45 (VICV…IYHF), 77-97 (AIVA…AFIA), 117-137 (ILFY…VFSF), 158-178 (FALA…AIIL), 195-215 (PYII…DVFS), and 217-237 (TLLA…ARFY).

The protein belongs to the TatC family. The Tat system comprises two distinct complexes: a TatABC complex, containing multiple copies of TatA, TatB and TatC subunits, and a separate TatA complex, containing only TatA subunits. Substrates initially bind to the TatABC complex, which probably triggers association of the separate TatA complex to form the active translocon.

Its subcellular location is the cell inner membrane. In terms of biological role, part of the twin-arginine translocation (Tat) system that transports large folded proteins containing a characteristic twin-arginine motif in their signal peptide across membranes. Together with TatB, TatC is part of a receptor directly interacting with Tat signal peptides. In Haemophilus influenzae (strain ATCC 51907 / DSM 11121 / KW20 / Rd), this protein is Sec-independent protein translocase protein TatC.